Here is a 522-residue protein sequence, read N- to C-terminus: Peptide chain release factor 3 (522 aa).

Positions 10–277 constitute a tr-type G domain; that stretch reads ASRKTFAIIS…TFVDFAPSPS (268 aa). GTP is bound by residues 19 to 26, 87 to 91, and 141 to 144; these read SHPDAGKT, DTPGH, and NKMD.

It belongs to the TRAFAC class translation factor GTPase superfamily. Classic translation factor GTPase family. PrfC subfamily.

It localises to the cytoplasm. Its function is as follows. Increases the formation of ribosomal termination complexes and stimulates activities of RF-1 and RF-2. It binds guanine nucleotides and has strong preference for UGA stop codons. It may interact directly with the ribosome. The stimulation of RF-1 and RF-2 is significantly reduced by GTP and GDP, but not by GMP. The protein is Peptide chain release factor 3 of Listeria monocytogenes serotype 4b (strain F2365).